The following is a 452-amino-acid chain: UDP-N-acetylmuramoylalanine--D-glutamate ligase (452 aa).

119 to 125 (GSNGKTT) is a binding site for ATP.

Belongs to the MurCDEF family.

It localises to the cytoplasm. It carries out the reaction UDP-N-acetyl-alpha-D-muramoyl-L-alanine + D-glutamate + ATP = UDP-N-acetyl-alpha-D-muramoyl-L-alanyl-D-glutamate + ADP + phosphate + H(+). Its pathway is cell wall biogenesis; peptidoglycan biosynthesis. Its function is as follows. Cell wall formation. Catalyzes the addition of glutamate to the nucleotide precursor UDP-N-acetylmuramoyl-L-alanine (UMA). This chain is UDP-N-acetylmuramoylalanine--D-glutamate ligase (murD), found in Streptococcus pyogenes serotype M1.